The chain runs to 208 residues: Large ribosomal subunit protein bL25 (208 aa).

Belongs to the bacterial ribosomal protein bL25 family. CTC subfamily. As to quaternary structure, part of the 50S ribosomal subunit; part of the 5S rRNA/L5/L18/L25 subcomplex. Contacts the 5S rRNA. Binds to the 5S rRNA independently of L5 and L18.

This is one of the proteins that binds to the 5S RNA in the ribosome where it forms part of the central protuberance. In Bordetella pertussis (strain Tohama I / ATCC BAA-589 / NCTC 13251), this protein is Large ribosomal subunit protein bL25.